The sequence spans 671 residues: DNA ligase (671 aa).

NAD(+) contacts are provided by residues 32–36, 81–82, and Glu113; these read DAEYD and SL. Lys115 (N6-AMP-lysine intermediate) is an active-site residue. 4 residues coordinate NAD(+): Arg136, Glu173, Lys290, and Lys314. Positions 408, 411, 426, and 432 each coordinate Zn(2+). The 79-residue stretch at 593–671 folds into the BRCT domain; sequence EIDSPFAGKT…EAEMLRLFGE (79 aa).

It belongs to the NAD-dependent DNA ligase family. LigA subfamily. Requires Mg(2+) as cofactor. Mn(2+) serves as cofactor.

The catalysed reaction is NAD(+) + (deoxyribonucleotide)n-3'-hydroxyl + 5'-phospho-(deoxyribonucleotide)m = (deoxyribonucleotide)n+m + AMP + beta-nicotinamide D-nucleotide.. Functionally, DNA ligase that catalyzes the formation of phosphodiester linkages between 5'-phosphoryl and 3'-hydroxyl groups in double-stranded DNA using NAD as a coenzyme and as the energy source for the reaction. It is essential for DNA replication and repair of damaged DNA. In Enterobacter sp. (strain 638), this protein is DNA ligase.